We begin with the raw amino-acid sequence, 91 residues long: Cell division protein FtsB (91 aa).

Topologically, residues 1–3 (MKW) are cytoplasmic. A helical membrane pass occupies residues 4-21 (LVAVLVVFVAMFQYRLWV). At 22-91 (GEGSIADVVR…ETFFMIIDDQ (70 aa)) the chain is on the periplasmic side. Residues 23–63 (EGSIADVVRLEREIARQEADNERLRERNKQLAAEVDALKTG) adopt a coiled-coil conformation.

It belongs to the FtsB family. As to quaternary structure, part of a complex composed of FtsB, FtsL and FtsQ.

The protein resides in the cell inner membrane. Essential cell division protein. May link together the upstream cell division proteins, which are predominantly cytoplasmic, with the downstream cell division proteins, which are predominantly periplasmic. The sequence is that of Cell division protein FtsB from Teredinibacter turnerae (strain ATCC 39867 / T7901).